A 1155-amino-acid polypeptide reads, in one-letter code: uncharacterized protein (1155 aa).

Positions 1 to 19 (MKKNIFITSLLILLLLLSS) are cleaved as a signal peptide. Residue C20 is the site of N-palmitoyl cysteine attachment. C20 is lipidated: S-diacylglycerol cysteine. Helical transmembrane passes span 289 to 309 (ISVS…FLIG), 395 to 415 (LGFI…FLIF), 424 to 444 (ALIT…FMLF), and 459 to 479 (ISYA…SMII).

It belongs to the TrbL/VirB6 family.

Its subcellular location is the cell membrane. This is an uncharacterized protein from Rickettsia prowazekii (strain Madrid E).